A 183-amino-acid chain; its full sequence is Negative modulator of initiation of replication (183 aa).

A disordered region spans residues 43–70 (VNDTQPVSAPAPSKAAPSAGNESRPQDR). The span at 50-61 (SAPAPSKAAPSA) shows a compositional bias: low complexity. Interaction with DNA stretches follow at residues 89 to 90 (AV), 118 to 122 (RTRIY), and 152 to 158 (NTNTGRK).

Belongs to the SeqA family. In terms of assembly, homodimer. Polymerizes to form helical filaments.

The protein resides in the cytoplasm. In terms of biological role, negative regulator of replication initiation, which contributes to regulation of DNA replication and ensures that replication initiation occurs exactly once per chromosome per cell cycle. Binds to pairs of hemimethylated GATC sequences in the oriC region, thus preventing assembly of replication proteins and re-initiation at newly replicated origins. Repression is relieved when the region becomes fully methylated. This chain is Negative modulator of initiation of replication, found in Pantoea ananatis (strain AJ13355).